Consider the following 528-residue polypeptide: Chromosomal replication initiator protein DnaA (528 aa).

The segment at 1 to 104 is domain I, interacts with DnaA modulators; sequence MNDDPNALAR…PVDDEPESDP (104 aa). A disordered region spans residues 95 to 158; sequence PVDDEPESDP…TDFEEVDDDR (64 aa). Basic and acidic residues predominate over residues 104-123; that stretch reads PPSRDHRPEPEPLHTPRHLE. The tract at residues 105–187 is domain II; the sequence is PSRDHRPEPE…GPAPSATGGN (83 aa). A compositionally biased stretch (acidic residues) spans 149–158; it reads TDFEEVDDDR. Residues 188–404 are domain III, AAA+ region; that stretch reads SLNAKYTFDT…GALIRVTAFA (217 aa). ATP is bound by residues Gly232, Gly234, Lys235, and Thr236. A domain IV, binds dsDNA region spans residues 405-528; sequence SLNRQPLDLT…TARIKQRSKR (124 aa).

The protein belongs to the DnaA family. In terms of assembly, oligomerizes as a right-handed, spiral filament on DNA at oriC.

It is found in the cytoplasm. Plays an essential role in the initiation and regulation of chromosomal replication. ATP-DnaA binds to the origin of replication (oriC) to initiate formation of the DNA replication initiation complex once per cell cycle. Binds the DnaA box (a 9 base pair repeat at the origin) and separates the double-stranded (ds)DNA. Forms a right-handed helical filament on oriC DNA; dsDNA binds to the exterior of the filament while single-stranded (ss)DNA is stabiized in the filament's interior. The ATP-DnaA-oriC complex binds and stabilizes one strand of the AT-rich DNA unwinding element (DUE), permitting loading of DNA polymerase. After initiation quickly degrades to an ADP-DnaA complex that is not apt for DNA replication. Binds acidic phospholipids. The polypeptide is Chromosomal replication initiator protein DnaA (Rhodococcus jostii (strain RHA1)).